Reading from the N-terminus, the 404-residue chain is Lupus La protein homolog (404 aa).

Residues 7–99 enclose the HTH La-type RNA-binding domain; it reads NEKMAALEAK…RRSPSKPLPE (93 aa). Residues serine 92 and serine 94 each carry the phosphoserine modification. Residues 111 to 187 enclose the RRM domain; it reads RSVYIKGFPT…TDLLILFKED (77 aa). At lysine 116 the chain carries N6-acetyllysine. Threonine 120 carries the phosphothreonine modification. Lysine 128 is modified (N6-acetyllysine). Phosphoserine is present on serine 225. The xRRM domain maps to 227 to 348; it reads EEKIGCLLKF…KGKGNKAAQA (122 aa). Residues lysine 328 and lysine 341 each carry the N6-acetyllysine modification. Basic residues predominate over residues 329-342; sequence WKSKGRRFKGKGKG. The tract at residues 329–404 is disordered; that stretch reads WKSKGRRFKG…QKTENGAGDQ (76 aa). A compositionally biased stretch (low complexity) spans 343–354; that stretch reads NKAAQAGSAKGK. Lysine 360 is modified (N6-acetyllysine). At threonine 362 the chain carries Phosphothreonine. Residue serine 366 is modified to Phosphoserine. Residues 381 to 391 are compositionally biased toward basic and acidic residues; sequence RAREETDKEPP.

In terms of assembly, interacts with DDX15. May interact with RUFY1. Phosphorylated in the C-terminal part of the protein.

Its subcellular location is the nucleus. Functionally, binds to the 3' poly(U) terminus of nascent RNA polymerase III transcripts, protecting them from exonuclease digestion and facilitating their folding and maturation. The sequence is that of Lupus La protein homolog (SSB) from Bos taurus (Bovine).